The sequence spans 323 residues: tRNA U34 carboxymethyltransferase (323 aa).

Residues Lys91, Trp105, Lys110, Gly130, 181 to 182 (IE), Met196, Tyr200, and Arg315 contribute to the carboxy-S-adenosyl-L-methionine site.

The protein belongs to the class I-like SAM-binding methyltransferase superfamily. CmoB family. As to quaternary structure, homotetramer.

The enzyme catalyses carboxy-S-adenosyl-L-methionine + 5-hydroxyuridine(34) in tRNA = 5-carboxymethoxyuridine(34) in tRNA + S-adenosyl-L-homocysteine + H(+). Functionally, catalyzes carboxymethyl transfer from carboxy-S-adenosyl-L-methionine (Cx-SAM) to 5-hydroxyuridine (ho5U) to form 5-carboxymethoxyuridine (cmo5U) at position 34 in tRNAs. This Sodalis glossinidius (strain morsitans) protein is tRNA U34 carboxymethyltransferase.